The following is a 266-amino-acid chain: MNYLNKIRIENPLTICYTNDVVKNFTANGLLSIGASPAMSEAPEEAEEFYKVAQGLLINIGTLTAENEQDIIAIAQTANEAGLPIVFDPVAVGASTYRKQFCKLLLKSAKVSVIKGNASEILALIDDTATMKGTDSDANLDAVTIAKKAYATYKTAIVITGKEDVIVQDNKAIVLANGSPLLARVTGAGCLLGGVIAGFLFRETEPDIEALIEAVSVFNIAAEVAAENENCGGPGTFSPLLLDTLYHLNETTYQQRIRIQEVEKYV.

Residue Met39 coordinates substrate. ATP-binding residues include Lys115 and Thr160. Residue Gly187 participates in substrate binding.

This sequence belongs to the Thz kinase family. It depends on Mg(2+) as a cofactor.

It carries out the reaction 5-(2-hydroxyethyl)-4-methylthiazole + ATP = 4-methyl-5-(2-phosphooxyethyl)-thiazole + ADP + H(+). It functions in the pathway cofactor biosynthesis; thiamine diphosphate biosynthesis; 4-methyl-5-(2-phosphoethyl)-thiazole from 5-(2-hydroxyethyl)-4-methylthiazole: step 1/1. Its function is as follows. Catalyzes the phosphorylation of the hydroxyl group of 4-methyl-5-beta-hydroxyethylthiazole (THZ). The protein is Hydroxyethylthiazole kinase of Staphylococcus aureus (strain MSSA476).